Consider the following 138-residue polypeptide: Putative pre-16S rRNA nuclease (138 aa).

The protein belongs to the YqgF nuclease family.

Its subcellular location is the cytoplasm. Could be a nuclease involved in processing of the 5'-end of pre-16S rRNA. The chain is Putative pre-16S rRNA nuclease from Geobacillus sp. (strain WCH70).